The sequence spans 131 residues: Maturin (131 aa).

Tyrosine 34 is subject to Phosphotyrosine. A compositionally biased stretch (acidic residues) spans 107–120 (FEEYSADVEEEEPE). Residues 107-131 (FEEYSADVEEEEPEADHPQMGVSQQ) are disordered.

This sequence belongs to the MTURN family. Phosphorylation at Tyr-34 is essential for its ability to promote megakaryocyte differentiation.

The protein resides in the cytoplasm. In terms of biological role, promotes megakaryocyte differentiation by enhancing ERK and JNK signaling as well as up-regulating RUNX1 and FLI1 expression. Represses NF-kappa-B transcriptional activity by inhibiting phosphorylation of RELA at 'Ser- 536'. May be involved in early neuronal development. This is Maturin (Mturn) from Rattus norvegicus (Rat).